Consider the following 355-residue polypeptide: MASSSSNRQFSHRNANTFLTYPKCPENPEIACQMIWELVVRWIPKYILCAREAHKDGSLHLHALLQTEKPVRISDSRFFDINGFHPNIQSAKSVNRVRDYILKEPLAVFERGTFIPRKSPFLGKSDSEVKEKKPSKDEIMRDIISHATSKAEYLSMIQKELPFDWSTKLQYFEYSANKLFPEIQEEFTNPHPPSSPDLLCNESINDWLQPNIFQSSDERSRKQSLYIVGPTRTGKSTWARSLGVHNYWQNNVDWSSYNEDAIYNIVDDIPFKFCPCWKQLVGCQRDFIVNPKYGKKKKVQKKSKPTIILANSDEDWMKEMTPGQLEYFEANCIIYIMSPGEKWYSPPVLPPTEEV.

Residues 11 to 114 (SHRNANTFLT…PLAVFERGTF (104 aa)) enclose the CRESS-DNA virus Rep endonuclease domain. Residues 18-21 (FLTY) carry the RCR-1 motif. A divalent metal cation contacts are provided by glutamate 52, histidine 60, and histidine 62. Residues 60–62 (HLH) carry the RCR-2 motif. The active-site For DNA cleavage activity is tyrosine 100. An RCR-3 motif is present at residues 100–103 (YILK). Glutamate 104 provides a ligand contact to a divalent metal cation. The interval 175-187 (SANKLFPEIQEEF) is oligomerization. 229 to 236 (GPTRTGKS) is a binding site for ATP. Residues 252 to 270 (VDWSSYNEDAIYNIVDDIP) are transactivation. The Nuclear localization signal motif lies at 292 to 303 (KYGKKKKVQKKS).

Belongs to the geminiviridae Rep protein family. As to quaternary structure, homooligomer. Rep binds to repeated DNA motifs (iterons). Forms the O-complex, which is a Rep-DNA complex involved in the initiation of RCR. Part of the C- and V-complexes which are RepA-Rep-DNA complexes involved in the c-sense and v-sense transcription. The cofactor is Mg(2+). It depends on Mn(2+) as a cofactor.

The protein localises to the host nucleus. Functionally, essential for the replication of viral ssDNA. The closed circular ssDNA genome is first converted to a superhelical dsDNA. Rep binds a specific region at the genome origin of replication. It introduces an endonucleolytic nick within the conserved sequence 5'-TAATATTAC-3' in the intergenic region of the genome present in all geminiviruses, thereby initiating the rolling circle replication (RCR). Following cleavage, binds covalently to the 5'-phosphate of DNA as a tyrosyl ester. The cleavage gives rise to a free 3'-OH that serves as a primer for the cellular DNA polymerase. The polymerase synthesizes the (+) strand DNA by rolling circle mechanism. After one round of replication, a Rep-catalyzed nucleotidyl transfer reaction releases a circular single-stranded virus genome, thereby terminating the replication. Displays origin-specific DNA cleavage, nucleotidyl transferase, ATPase and helicase activities. Acts as an inhibitor of C-sense gene transcription. In Maize streak virus genotype A (isolate South Africa) (MSV), this protein is Replication-associated protein.